We begin with the raw amino-acid sequence, 239 residues long: tRNA1(Val) (adenine(37)-N6)-methyltransferase (239 aa).

The protein belongs to the methyltransferase superfamily. tRNA (adenine-N(6)-)-methyltransferase family.

Its subcellular location is the cytoplasm. It catalyses the reaction adenosine(37) in tRNA1(Val) + S-adenosyl-L-methionine = N(6)-methyladenosine(37) in tRNA1(Val) + S-adenosyl-L-homocysteine + H(+). Functionally, specifically methylates the adenine in position 37 of tRNA(1)(Val) (anticodon cmo5UAC). The protein is tRNA1(Val) (adenine(37)-N6)-methyltransferase of Vibrio vulnificus (strain YJ016).